Here is a 312-residue protein sequence, read N- to C-terminus: Methionyl-tRNA formyltransferase (312 aa).

(6S)-5,6,7,8-tetrahydrofolate is bound at residue 109 to 112 (SLLP).

It belongs to the Fmt family.

It carries out the reaction L-methionyl-tRNA(fMet) + (6R)-10-formyltetrahydrofolate = N-formyl-L-methionyl-tRNA(fMet) + (6S)-5,6,7,8-tetrahydrofolate + H(+). Functionally, attaches a formyl group to the free amino group of methionyl-tRNA(fMet). The formyl group appears to play a dual role in the initiator identity of N-formylmethionyl-tRNA by promoting its recognition by IF2 and preventing the misappropriation of this tRNA by the elongation apparatus. This Nitrosospira multiformis (strain ATCC 25196 / NCIMB 11849 / C 71) protein is Methionyl-tRNA formyltransferase.